The primary structure comprises 278 residues: S-formylglutathione hydrolase YeiG (278 aa).

Active-site charge relay system residues include serine 145, aspartate 223, and histidine 256.

The protein belongs to the esterase D family.

It catalyses the reaction S-formylglutathione + H2O = formate + glutathione + H(+). Its function is as follows. Serine hydrolase involved in the detoxification of formaldehyde. Hydrolyzes S-formylglutathione to glutathione and formate. This is S-formylglutathione hydrolase YeiG (yeiG) from Escherichia coli O139:H28 (strain E24377A / ETEC).